Consider the following 363-residue polypeptide: UDP-N-acetylglucosamine--N-acetylmuramyl-(pentapeptide) pyrophosphoryl-undecaprenol N-acetylglucosamine transferase (363 aa).

Residues 10–12 (TGG), asparagine 124, serine 195, isoleucine 250, and glutamine 295 contribute to the UDP-N-acetyl-alpha-D-glucosamine site.

This sequence belongs to the glycosyltransferase 28 family. MurG subfamily.

It is found in the cell membrane. It carries out the reaction di-trans,octa-cis-undecaprenyl diphospho-N-acetyl-alpha-D-muramoyl-L-alanyl-D-glutamyl-meso-2,6-diaminopimeloyl-D-alanyl-D-alanine + UDP-N-acetyl-alpha-D-glucosamine = di-trans,octa-cis-undecaprenyl diphospho-[N-acetyl-alpha-D-glucosaminyl-(1-&gt;4)]-N-acetyl-alpha-D-muramoyl-L-alanyl-D-glutamyl-meso-2,6-diaminopimeloyl-D-alanyl-D-alanine + UDP + H(+). It participates in cell wall biogenesis; peptidoglycan biosynthesis. Cell wall formation. Catalyzes the transfer of a GlcNAc subunit on undecaprenyl-pyrophosphoryl-MurNAc-pentapeptide (lipid intermediate I) to form undecaprenyl-pyrophosphoryl-MurNAc-(pentapeptide)GlcNAc (lipid intermediate II). This is UDP-N-acetylglucosamine--N-acetylmuramyl-(pentapeptide) pyrophosphoryl-undecaprenol N-acetylglucosamine transferase from Listeria monocytogenes serovar 1/2a (strain ATCC BAA-679 / EGD-e).